Reading from the N-terminus, the 125-residue chain is UPF0102 protein CCNA_00142 (125 aa).

It belongs to the UPF0102 family.

The sequence is that of UPF0102 protein CCNA_00142 from Caulobacter vibrioides (strain NA1000 / CB15N) (Caulobacter crescentus).